Reading from the N-terminus, the 394-residue chain is Actin-related protein 2-A (394 aa).

ATP contacts are provided by residues 160–162, 214–218, and 305–310; these read GDG, RMIKE, and GGSTMY.

The protein belongs to the actin family. ARP2 subfamily. Component of the Arp2/3 complex composed of actr2/arp2, actr3/arp3, arpc1 (arpc1a or arpc1b), arpc2, arpc3, arpc4 and arpc5.

The protein localises to the cytoplasm. The protein resides in the cytoskeleton. It is found in the cell projection. It localises to the nucleus. Functionally, ATP-binding component of the Arp2/3 complex, a multiprotein complex that mediates actin polymerization upon stimulation by nucleation-promoting factor (NPF). The Arp2/3 complex mediates the formation of branched actin networks in the cytoplasm, providing the force for cell motility. Seems to contact the pointed end of the daughter actin filament. In addition to its role in the cytoplasmic cytoskeleton, the Arp2/3 complex also promotes actin polymerization in the nucleus, thereby regulating gene transcription and repair of damaged DNA. The Arp2/3 complex promotes homologous recombination (HR) repair in response to DNA damage by promoting nuclear actin polymerization, leading to drive motility of double-strand breaks (DSBs). The polypeptide is Actin-related protein 2-A (actr2-a) (Xenopus laevis (African clawed frog)).